A 205-amino-acid chain; its full sequence is Non-structural protein NS3 (205 aa).

Positions 177-205 (GTRSPETGCRKVTSGLPHGASGGSGTRQG) are disordered. A compositionally biased stretch (gly residues) spans 196 to 205 (ASGGSGTRQG).

The protein belongs to the orbivirus NS3 family.

Its function is as follows. May play a role in the release of virions from infected cells. This chain is Non-structural protein NS3 (Segment-10), found in Broadhaven virus (BRD).